A 29-amino-acid polypeptide reads, in one-letter code: Cyclotide mech-7 (29 aa).

Residues 1–29 (GIPICGETCTIGTCNTPGCTCSWPVCTRD) constitute a cross-link (cyclopeptide (Gly-Asp)). 3 disulfides stabilise this stretch: cysteine 5-cysteine 19, cysteine 9-cysteine 21, and cysteine 14-cysteine 26.

In terms of processing, this is a cyclic peptide. Post-translationally, contains 3 disulfide bonds.

Functionally, probably participates in a plant defense mechanism (Potential). Binds to and induces leakage in phospholipd membranes, particularly ones containing 1-palmitoyl-2-oleophosphatidylethanolamine (POPE). In Melicytus chathamicus (Chatham Island mahoe), this protein is Cyclotide mech-7.